The following is a 150-amino-acid chain: D-aminoacyl-tRNA deacylase (150 aa).

The short motif at 138 to 139 is the Gly-cisPro motif, important for rejection of L-amino acids element; the sequence is GP.

This sequence belongs to the DTD family. Homodimer.

It localises to the cytoplasm. The catalysed reaction is glycyl-tRNA(Ala) + H2O = tRNA(Ala) + glycine + H(+). The enzyme catalyses a D-aminoacyl-tRNA + H2O = a tRNA + a D-alpha-amino acid + H(+). An aminoacyl-tRNA editing enzyme that deacylates mischarged D-aminoacyl-tRNAs. Also deacylates mischarged glycyl-tRNA(Ala), protecting cells against glycine mischarging by AlaRS. Acts via tRNA-based rather than protein-based catalysis; rejects L-amino acids rather than detecting D-amino acids in the active site. By recycling D-aminoacyl-tRNA to D-amino acids and free tRNA molecules, this enzyme counteracts the toxicity associated with the formation of D-aminoacyl-tRNA entities in vivo and helps enforce protein L-homochirality. The polypeptide is D-aminoacyl-tRNA deacylase (Salinibacter ruber (strain DSM 13855 / M31)).